A 434-amino-acid polypeptide reads, in one-letter code: MLDIKWIRDNPKALVEALAKRSWSAGEAQSTVDDLIARDEARREHVTELQTKQERRNAASKEIGNAMRSGDAALAEKLKAEVGDIKTFIQNGEARERELDKALTDALAVLPNVPLDDVPVGKDEHDNVVKHIVGKVPTRSNWVKEHFEIGEALGMMDFERAAKLSGSRFTVLKSGLARMERAIGQFMLDLHTTEHGYEEVIPPLMVRDEVLFGTNQLPKFEEDLFFTPHGEGRLGLIPTAEVPLTNLVREEITAHEKLPLRFTALTPCFRSEAGSAGRDTRGMLRQHQFYKVELVSITDQDSSLAEHERMTQCAEEVLKRLELPFRTMVLCTGDMGFGARKTYDIEVWLPGQNAYREISSCSVCGDFQARRMDARYKDKDGKGNRFVHTLNGSGTAVGRALIAVIENYQNEDGSVTIPEVLRPYMGGLAKIEAK.

Residue 239 to 241 coordinates L-serine; that stretch reads TAE. Position 270–272 (270–272) interacts with ATP; sequence RSE. Glu293 contributes to the L-serine binding site. 357–360 provides a ligand contact to ATP; the sequence is EISS. Position 393 (Ser393) interacts with L-serine.

This sequence belongs to the class-II aminoacyl-tRNA synthetase family. Type-1 seryl-tRNA synthetase subfamily. Homodimer. The tRNA molecule binds across the dimer.

Its subcellular location is the cytoplasm. The catalysed reaction is tRNA(Ser) + L-serine + ATP = L-seryl-tRNA(Ser) + AMP + diphosphate + H(+). The enzyme catalyses tRNA(Sec) + L-serine + ATP = L-seryl-tRNA(Sec) + AMP + diphosphate + H(+). It functions in the pathway aminoacyl-tRNA biosynthesis; selenocysteinyl-tRNA(Sec) biosynthesis; L-seryl-tRNA(Sec) from L-serine and tRNA(Sec): step 1/1. Functionally, catalyzes the attachment of serine to tRNA(Ser). Is also able to aminoacylate tRNA(Sec) with serine, to form the misacylated tRNA L-seryl-tRNA(Sec), which will be further converted into selenocysteinyl-tRNA(Sec). The chain is Serine--tRNA ligase from Mesorhizobium japonicum (strain LMG 29417 / CECT 9101 / MAFF 303099) (Mesorhizobium loti (strain MAFF 303099)).